The primary structure comprises 242 residues: Lactate utilization protein A 2 (242 aa).

Belongs to the LutA/YkgE family.

Its function is as follows. Is involved in L-lactate degradation and allows cells to grow with lactate as the sole carbon source. The protein is Lactate utilization protein A 2 of Bacillus cereus (strain 03BB102).